Here is a 1469-residue protein sequence, read N- to C-terminus: Accumulation-associated protein (1469 aa).

An N-terminal signal peptide occupies residues 1 to 52 (MGKRRQGPINKKVDFLPNKLNKYSIRKFTVGTASILLGSTLIFGSSSHEAKA). Disordered stretches follow at residues 52–164 (AAEE…SEPV), 486–511 (GIET…TPTT), and 528–1443 (EIKP…QANE). Composition is skewed to polar residues over residues 75–94 (ENTN…STLQ) and 110–125 (KANS…SEAP). Positions 129-144 (DLARKEDIPAVSKNEE) are enriched in basic and acidic residues. Positions 145 to 164 (LQSSQPNTDSKIEPTTSEPV) are enriched in polar residues. 7 G5 domains span residues 446 to 528 (PKAV…GGEE), 574 to 656 (YGPV…GGEE), 702 to 784 (YGPV…GGEE), 830 to 912 (YGPV…GGEE), 958 to 1040 (YGPV…GGEE), 1086 to 1168 (YGPV…GGEQ), and 1211 to 1296 (VTKY…GPTK). Over residues 489-500 (TTTTPTYVNPNT) the composition is skewed to low complexity. Basic and acidic residues-rich tracts occupy residues 528 to 537 (EIKPGHKDEF) and 589 to 613 (PFDK…KGEP). Residues 614 to 629 (GTKTITTPTTKNPLTG) are compositionally biased toward low complexity. Basic and acidic residues-rich tracts occupy residues 631-646 (KVGE…KQPV) and 655-665 (EEIKPGHKDEF). The segment covering 738–757 (KGEPGTKTITTPTTKNPLTG) has biased composition (low complexity). Basic and acidic residues-rich tracts occupy residues 759-793 (KVGE…KDEF) and 845-869 (PFDK…KGEP). Residues 870–885 (GTKTITTPTTKNPLTG) show a composition bias toward low complexity. Residues 887-921 (KVGEGEPTEKVTKQPVDEIVHYGGEEIKPGHKDEF) show a composition bias toward basic and acidic residues. Positions 994-1013 (KGEPGTKTITTPTTKNPLTG) are enriched in low complexity. Residues 1015–1049 (KVGEGEPTEKITKQPVDEIVHYGGEEIKPGHKDEF) are compositionally biased toward basic and acidic residues. A compositionally biased stretch (low complexity) spans 1122–1141 (KGEPGTKTITTPTTKNPLTG). Basic and acidic residues-rich tracts occupy residues 1143–1162 (KVGE…DEIV), 1229–1253 (PFDK…KGEP), and 1271–1286 (KVGE…KQPV). Positions 1409–1443 (TPTQSGAPEQPNRSMHSTDNKNQLPDTGENRQANE) are enriched in polar residues. An LPXTG sorting signal motif is present at residues 1432 to 1436 (LPDTG). A Pentaglycyl murein peptidoglycan amidated threonine modification is found at Thr1435. Positions 1436 to 1469 (GENRQANEGTLVGSLLAIVGSLFIFGRRKKGNEK) are cleaved as a propeptide — removed by sortase.

Its subcellular location is the secreted. The protein resides in the cell wall. The sequence is that of Accumulation-associated protein from Staphylococcus epidermidis (strain ATCC 12228 / FDA PCI 1200).